Reading from the N-terminus, the 282-residue chain is Probable methylxanthine N7-demethylase NdmC (282 aa).

The enzyme catalyses 7-methylxanthine + NADPH + O2 + H(+) = xanthine + formaldehyde + NADP(+) + H2O. It carries out the reaction 7-methylxanthine + NADH + O2 + H(+) = xanthine + formaldehyde + NAD(+) + H2O. Functionally, involved in the caffeine degradation, which is the essential first step for assimilating the carbon and nitrogen in caffeine. Probably catalyzes the N7-demethylation of 7-methylxanthine to produce xanthine and formaldehyde. The protein is Probable methylxanthine N7-demethylase NdmC of Pseudomonas sp. (strain TJI-51).